The sequence spans 28 residues: Fibrinogen alpha chain (28 aa).

At S3 the chain carries Phosphoserine.

As to quaternary structure, heterohexamer; disulfide linked. Contains 2 sets of 3 non-identical chains (alpha, beta and gamma). The 2 heterotrimers are in head to head conformation with the N-termini in a small central domain. In terms of processing, conversion of fibrinogen to fibrin is triggered by thrombin, which cleaves fibrinopeptides A and B from alpha and beta chains, and thus exposes the N-terminal polymerization sites responsible for the formation of the soft clot. The soft clot is converted into the hard clot by factor XIIIA which catalyzes the epsilon-(gamma-glutamyl)lysine cross-linking between gamma chains (stronger) and between alpha chains (weaker) of different monomers. Post-translationally, forms F13A-mediated cross-links between a glutamine and the epsilon-amino group of a lysine residue, forming fibronectin-fibrinogen heteropolymers.

It is found in the secreted. Functionally, cleaved by the protease thrombin to yield monomers which, together with fibrinogen beta (FGB) and fibrinogen gamma (FGG), polymerize to form an insoluble fibrin matrix. Fibrin has a major function in hemostasis as one of the primary components of blood clots. In addition, functions during the early stages of wound repair to stabilize the lesion and guide cell migration during re-epithelialization. Was originally thought to be essential for platelet aggregation, based on in vitro studies using anticoagulated blood. However, subsequent studies have shown that it is not absolutely required for thrombus formation in vivo. Enhances expression of SELP in activated platelets via an ITGB3-dependent pathway. Maternal fibrinogen is essential for successful pregnancy. Fibrin deposition is also associated with infection, where it protects against IFNG-mediated hemorrhage. May also facilitate the immune response via both innate and T-cell mediated pathways. In Canis lupus familiaris (Dog), this protein is Fibrinogen alpha chain (FGA).